Reading from the N-terminus, the 492-residue chain is Forkhead box protein O6 (492 aa).

Disordered stretches follow at residues 1 to 76 (MAAK…EVGP), 163 to 235 (SWWM…ASPA), 315 to 338 (GAGL…APRP), and 466 to 492 (FNFD…WVPG). The fork-head DNA-binding region spans 88-182 (WGNLSYADLI…KTGKTPRRRA (95 aa)). Ser184 is modified (phosphoserine). The span at 192 to 203 (LRIKGKASKKKQ) shows a compositional bias: basic residues. Residues 225-235 (PAAAKWAASPA) show a composition bias toward low complexity. A compositionally biased stretch (pro residues) spans 472-486 (LPPPPPGLAGAPPPN).

Phosphorylation of Ser-184 is be important in regulating the transacriptional activity.

It is found in the cytoplasm. The protein localises to the nucleus. Its function is as follows. Transcriptional activator. The polypeptide is Forkhead box protein O6 (FOXO6) (Homo sapiens (Human)).